The sequence spans 466 residues: Soluble pyridine nucleotide transhydrogenase (466 aa).

Residue 36-45 coordinates FAD; sequence ERYQNVGGGC.

Belongs to the class-I pyridine nucleotide-disulfide oxidoreductase family. The cofactor is FAD.

The protein resides in the cytoplasm. It catalyses the reaction NAD(+) + NADPH = NADH + NADP(+). Conversion of NADPH, generated by peripheral catabolic pathways, to NADH, which can enter the respiratory chain for energy generation. This chain is Soluble pyridine nucleotide transhydrogenase, found in Escherichia coli O9:H4 (strain HS).